The primary structure comprises 474 residues: ATP synthase subunit beta 2 (474 aa).

Position 157 to 164 (157 to 164 (GGAGVGKT)) interacts with ATP.

This sequence belongs to the ATPase alpha/beta chains family. As to quaternary structure, F-type ATPases have 2 components, CF(1) - the catalytic core - and CF(0) - the membrane proton channel. CF(1) has five subunits: alpha(3), beta(3), gamma(1), delta(1), epsilon(1). CF(0) has three main subunits: a(1), b(2) and c(9-12). The alpha and beta chains form an alternating ring which encloses part of the gamma chain. CF(1) is attached to CF(0) by a central stalk formed by the gamma and epsilon chains, while a peripheral stalk is formed by the delta and b chains.

It is found in the cell inner membrane. The enzyme catalyses ATP + H2O + 4 H(+)(in) = ADP + phosphate + 5 H(+)(out). In terms of biological role, produces ATP from ADP in the presence of a proton gradient across the membrane. The catalytic sites are hosted primarily by the beta subunits. The sequence is that of ATP synthase subunit beta 2 from Polaromonas naphthalenivorans (strain CJ2).